A 341-amino-acid polypeptide reads, in one-letter code: Anthranilate phosphoribosyltransferase (341 aa).

5-phospho-alpha-D-ribose 1-diphosphate-binding positions include Gly79, 82–83 (GD), Thr87, 89–92 (NIST), 107–115 (KHGNRAASS), and Ala119. Gly79 provides a ligand contact to anthranilate. Ser91 lines the Mg(2+) pocket. Position 110 (Asn110) interacts with anthranilate. Anthranilate is bound at residue Arg165. Mg(2+) contacts are provided by Asp224 and Glu225.

The protein belongs to the anthranilate phosphoribosyltransferase family. As to quaternary structure, homodimer. Mg(2+) is required as a cofactor.

The enzyme catalyses N-(5-phospho-beta-D-ribosyl)anthranilate + diphosphate = 5-phospho-alpha-D-ribose 1-diphosphate + anthranilate. It functions in the pathway amino-acid biosynthesis; L-tryptophan biosynthesis; L-tryptophan from chorismate: step 2/5. In terms of biological role, catalyzes the transfer of the phosphoribosyl group of 5-phosphorylribose-1-pyrophosphate (PRPP) to anthranilate to yield N-(5'-phosphoribosyl)-anthranilate (PRA). This chain is Anthranilate phosphoribosyltransferase, found in Lacticaseibacillus paracasei (strain ATCC 334 / BCRC 17002 / CCUG 31169 / CIP 107868 / KCTC 3260 / NRRL B-441) (Lactobacillus paracasei).